The primary structure comprises 292 residues: Mitochondrial ornithine transporter 1 (292 aa).

Solcar repeat units lie at residues 11 to 97 (EGAI…CSKF), 105 to 196 (SPLG…VKKS), and 211 to 292 (SKIW…LSAL). 6 helical membrane-spanning segments follow: residues 14-34 (ILDI…EFPF), 69-89 (FFQG…TLFV), 104-124 (VSPL…ASLV), 171-187 (GQSG…VAWF), 213-233 (IWEL…SIFP), and 267-287 (GLGI…YIFE).

Belongs to the mitochondrial carrier (TC 2.A.29) family.

Its subcellular location is the mitochondrion inner membrane. In terms of biological role, required for arginine biosynthesis. Transports ornithine synthesized from glutamate in the mitochondrial matrix to the cytosol, where it is converted to arginine. This is Mitochondrial ornithine transporter 1 (ORT1) from Saccharomyces cerevisiae (strain ATCC 204508 / S288c) (Baker's yeast).